A 213-amino-acid chain; its full sequence is Orotate phosphoribosyltransferase (213 aa).

Lysine 26 lines the 5-phospho-alpha-D-ribose 1-diphosphate pocket. Residue 34-35 (FF) participates in orotate binding. 5-phospho-alpha-D-ribose 1-diphosphate contacts are provided by residues 72–73 (YK), arginine 99, lysine 100, lysine 103, histidine 105, and 124–132 (DDVITAGTA). Positions 128 and 156 each coordinate orotate.

This sequence belongs to the purine/pyrimidine phosphoribosyltransferase family. PyrE subfamily. In terms of assembly, homodimer. Requires Mg(2+) as cofactor.

It carries out the reaction orotidine 5'-phosphate + diphosphate = orotate + 5-phospho-alpha-D-ribose 1-diphosphate. It participates in pyrimidine metabolism; UMP biosynthesis via de novo pathway; UMP from orotate: step 1/2. In terms of biological role, catalyzes the transfer of a ribosyl phosphate group from 5-phosphoribose 1-diphosphate to orotate, leading to the formation of orotidine monophosphate (OMP). The protein is Orotate phosphoribosyltransferase of Vibrio cholerae serotype O1 (strain ATCC 39315 / El Tor Inaba N16961).